A 302-amino-acid polypeptide reads, in one-letter code: Sulfate adenylyltransferase subunit 2 2 (302 aa).

It belongs to the PAPS reductase family. CysD subfamily. As to quaternary structure, heterodimer composed of CysD, the smaller subunit, and CysN.

It carries out the reaction sulfate + ATP + H(+) = adenosine 5'-phosphosulfate + diphosphate. It participates in sulfur metabolism; hydrogen sulfide biosynthesis; sulfite from sulfate: step 1/3. With CysN forms the ATP sulfurylase (ATPS) that catalyzes the adenylation of sulfate producing adenosine 5'-phosphosulfate (APS) and diphosphate, the first enzymatic step in sulfur assimilation pathway. APS synthesis involves the formation of a high-energy phosphoric-sulfuric acid anhydride bond driven by GTP hydrolysis by CysN coupled to ATP hydrolysis by CysD. The sequence is that of Sulfate adenylyltransferase subunit 2 2 from Alkalilimnicola ehrlichii (strain ATCC BAA-1101 / DSM 17681 / MLHE-1).